Reading from the N-terminus, the 437-residue chain is Ribosomal protein uS12 methylthiotransferase RimO (437 aa).

One can recognise an MTTase N-terminal domain in the interval 5–116; sequence PTIAISHLGC…IVEIVERVET (112 aa). [4Fe-4S] cluster contacts are provided by cysteine 14, cysteine 50, cysteine 79, cysteine 154, cysteine 158, and cysteine 161. In terms of domain architecture, Radical SAM core spans 140 to 369; it reads TTSEGVAYLR…MLTQQPISER (230 aa). Residues 372–437 form the TRAM domain; sequence QAYIGQTVDV…DTYDLYGEIV (66 aa).

The protein belongs to the methylthiotransferase family. RimO subfamily. [4Fe-4S] cluster is required as a cofactor.

It localises to the cytoplasm. It catalyses the reaction L-aspartate(89)-[ribosomal protein uS12]-hydrogen + (sulfur carrier)-SH + AH2 + 2 S-adenosyl-L-methionine = 3-methylsulfanyl-L-aspartate(89)-[ribosomal protein uS12]-hydrogen + (sulfur carrier)-H + 5'-deoxyadenosine + L-methionine + A + S-adenosyl-L-homocysteine + 2 H(+). Catalyzes the methylthiolation of an aspartic acid residue of ribosomal protein uS12. This chain is Ribosomal protein uS12 methylthiotransferase RimO, found in Microcystis aeruginosa (strain NIES-843 / IAM M-2473).